A 592-amino-acid polypeptide reads, in one-letter code: ATP-dependent RNA helicase DBP3 (592 aa).

The disordered stretch occupies residues 1-146 (MGKRPIEDDA…AGSYTEHTEL (146 aa)). The segment covering 19 to 31 (KKSKKEKSGKSKK) has biased composition (basic residues). Basic and acidic residues predominate over residues 73-82 (EAKEASKAGK). Residues 97–108 (AARKAARKAEKK) show a composition bias toward basic residues. Polar residues predominate over residues 116-141 (TASSAPTEASSVPAQTLSSSNAGSYT). The Q motif signature appears at 179-206 (VNFKYLPVTDESQRAPFAGFTAPTPIQA). Positions 209-382 (WPFLLSGRDM…STFMVSPVRI (174 aa)) constitute a Helicase ATP-binding domain. 222–229 (AETGSGKT) contributes to the ATP binding site. The DEAD box signature appears at 330–333 (DEAD). One can recognise a Helicase C-terminal domain in the interval 413–562 (RLLQLLKQYQ…EVPEELLKFG (150 aa)).

Belongs to the DEAD box helicase family. DDX5/DBP2 subfamily.

Its subcellular location is the nucleus. The protein resides in the nucleolus. It carries out the reaction ATP + H2O = ADP + phosphate + H(+). Its function is as follows. ATP-dependent RNA helicase required for 60S ribosomal subunit synthesis. Involved in efficient pre-rRNA processing, predominantly at site A3, which is necessary for the normal formation of 25S and 5.8S rRNAs. The polypeptide is ATP-dependent RNA helicase DBP3 (DBP3) (Phaeosphaeria nodorum (strain SN15 / ATCC MYA-4574 / FGSC 10173) (Glume blotch fungus)).